We begin with the raw amino-acid sequence, 170 residues long: Shikimate kinase (170 aa).

11–16 (LSGKST) is a binding site for ATP. Mg(2+) is bound at residue Ser-15. 3 residues coordinate substrate: Asp-33, Arg-57, and Gly-79. Arg-119 is an ATP binding site. Substrate is bound at residue Arg-137.

Belongs to the shikimate kinase family. As to quaternary structure, monomer. It depends on Mg(2+) as a cofactor.

Its subcellular location is the cytoplasm. It carries out the reaction shikimate + ATP = 3-phosphoshikimate + ADP + H(+). It functions in the pathway metabolic intermediate biosynthesis; chorismate biosynthesis; chorismate from D-erythrose 4-phosphate and phosphoenolpyruvate: step 5/7. In terms of biological role, catalyzes the specific phosphorylation of the 3-hydroxyl group of shikimic acid using ATP as a cosubstrate. This is Shikimate kinase from Clostridium botulinum (strain Langeland / NCTC 10281 / Type F).